The primary structure comprises 139 residues: D-ribose pyranase (139 aa).

His-20 acts as the Proton donor in catalysis. Residues Asp-28, His-106, and Tyr-128–Asn-130 contribute to the substrate site.

It belongs to the RbsD / FucU family. RbsD subfamily. Homodecamer.

It localises to the cytoplasm. The catalysed reaction is beta-D-ribopyranose = beta-D-ribofuranose. It participates in carbohydrate metabolism; D-ribose degradation; D-ribose 5-phosphate from beta-D-ribopyranose: step 1/2. Functionally, catalyzes the interconversion of beta-pyran and beta-furan forms of D-ribose. The polypeptide is D-ribose pyranase (Pasteurella multocida (strain Pm70)).